Consider the following 345-residue polypeptide: tRNA-specific 2-thiouridylase MnmA 1 (345 aa).

ATP-binding positions include glycine 9–serine 16 and leucine 35. The active-site Nucleophile is the cysteine 96. A disulfide bridge links cysteine 96 with cysteine 191. Glycine 120 contacts ATP. Residues lysine 138–glutamine 140 are interaction with tRNA. The Cysteine persulfide intermediate role is filled by cysteine 191. Residues arginine 293–tyrosine 294 are interaction with tRNA.

Belongs to the MnmA/TRMU family.

It is found in the cytoplasm. The catalysed reaction is S-sulfanyl-L-cysteinyl-[protein] + uridine(34) in tRNA + AH2 + ATP = 2-thiouridine(34) in tRNA + L-cysteinyl-[protein] + A + AMP + diphosphate + H(+). Its function is as follows. Catalyzes the 2-thiolation of uridine at the wobble position (U34) of tRNA, leading to the formation of s(2)U34. The polypeptide is tRNA-specific 2-thiouridylase MnmA 1 (Aliarcobacter butzleri (strain RM4018) (Arcobacter butzleri)).